Consider the following 203-residue polypeptide: Galactoside O-acetyltransferase (203 aa).

Substrate contacts are provided by aspartate 17, serine 71, asparagine 85, and aspartate 93. Asparagine 85 lines the acetyl-CoA pocket. The Proton donor/acceptor role is filled by histidine 115. Acetyl-CoA-binding positions include serine 142, alanine 160, threonine 165–lysine 166, arginine 180, and arginine 183.

This sequence belongs to the transferase hexapeptide repeat family. In terms of assembly, homotrimer. Post-translationally, the N-terminus of this protein is heterogeneous because the initiator methionine is only partially cleaved.

The protein resides in the cytoplasm. The enzyme catalyses a beta-D-galactoside + acetyl-CoA = a 6-acetyl-beta-D-galactoside + CoA. Its function is as follows. Catalyzes the CoA-dependent transfer of an acetyl group to the 6-O-methyl position of a range of galactosides, glucosides, and lactosides. May assist cellular detoxification by acetylating non-metabolizable pyranosides, thereby preventing their reentry into the cell. This is Galactoside O-acetyltransferase (lacA) from Escherichia coli (strain K12).